The sequence spans 766 residues: MPDAIRQLTLANGLQLTLRHAPRLKRSAAALRVHAGSHDAPAKWPGLAHFLEHLFFLGTPRFPLEDGLMRYVQALGGQVNASTRERATDFFFEVPPNALGGGLERLCQMLAEPDLGIERQRREREVIHAEFIAWSRNPTAQQQFALLQSVSARHPLGAFHAGNRYTLALHDAAFQQALAGFHQRFYQGGQICLSLCGPQPLDELERLARQQAELFAAGERVPQILPPPLPAMASALTFTHQSLPSGAEHALELLIAYLEDSRPGTWLGALRERGWLRRFTAERLYAFAGQLLWHLDLKLSADACPDEASALLQGWFRFIRQADREQLNHQFGLLQHSRAHSASALELARRDSTGQPFAKLDTQGLQALGALLESLPGADHGDWQLLPVDPLLKADLPHAKAQPLPAALKISDQLPPARQFAALYLRWHVPSPMRQPLQRVLEQALAPLQERCDRASVQLQYSSAGEYWQLHCAGLPAAVLRAVEQALALMLKPPASCWLPCTALPPALIPIRALLKQLPDAVRGSLPPAVPACTLTQQQLDSLWLHTEWHGMAAGFEDTALKALGAALEQCPGQGSRPSPLPTWANHRWQHAQVPGSEHALLLFCPLPAAKEAAGRLLAQLLQGPVYQRLRVDLQLGYAVFSAFRQVEGVGGLLFGVQSPHTDQAQVLDHLLNLLRHGVTLDPAARQALAGQFDEPAMANADVAEWAWQTHLATQADRLDVLRRSILTTRQTDLDHLLSALLDPGSAWLCLANAAAPDTSWQGENR.

His-49 provides a ligand contact to Zn(2+). Residue Glu-52 is the Proton acceptor of the active site. Zn(2+) is bound by residues His-53 and Glu-130.

Belongs to the peptidase M16 family. Zn(2+) serves as cofactor.

It functions in the pathway cofactor biosynthesis; pyrroloquinoline quinone biosynthesis. Required for coenzyme pyrroloquinoline quinone (PQQ) biosynthesis. It is thought that this protein is a protease that cleaves peptides bond in a small peptide (gene pqqA), providing the glutamate and tyrosine residues which are necessary for the synthesis of PQQ. This Pseudomonas putida (strain ATCC 47054 / DSM 6125 / CFBP 8728 / NCIMB 11950 / KT2440) protein is Coenzyme PQQ synthesis protein F (pqqF).